Consider the following 392-residue polypeptide: ATP phosphoribosyltransferase regulatory subunit (392 aa).

This sequence belongs to the class-II aminoacyl-tRNA synthetase family. HisZ subfamily. Heteromultimer composed of HisG and HisZ subunits.

The protein localises to the cytoplasm. It participates in amino-acid biosynthesis; L-histidine biosynthesis; L-histidine from 5-phospho-alpha-D-ribose 1-diphosphate: step 1/9. Functionally, required for the first step of histidine biosynthesis. May allow the feedback regulation of ATP phosphoribosyltransferase activity by histidine. This Marinomonas sp. (strain MWYL1) protein is ATP phosphoribosyltransferase regulatory subunit.